Here is a 420-residue protein sequence, read N- to C-terminus: MAKKTPGNNGKQKLFCSFCGKEQDAVKRLVAGPGVYICDECISLCNEIIAEDHEHSHEKSEVFSEVPSPADIKSILDQYVIGQDHAKKALSVAVYNHYKRVNLKEKKSDVEIEKSNILLIGPTGSGKTLLAQTLARIIKVPFAIVDATALTEAGYVGEDVENIILKLIQNADNDIKKAEVGIIYIDEVDKIARKSDSASITRDVSGEGVQQALLKIIEGTVANVPPQGGRKHPHQEYLQVDTKNILFILGGAFVDLPNIIKSRTGIKTIGFGSEEQRIQSENKDVLMEQVIPEDLIKFGLIPEFIGRLPIVATLQELNVDMLRQIFREPKNSVLKQYTRLLELENVKLTFHDEAIDKIAELAIKRESGARGLRAIVENIMLDLMFDIPSRKDIEEVIITAEVIANRVAPTLILKKESKIA.

One can recognise a ClpX-type ZB domain in the interval 4–57 (KTPGNNGKQKLFCSFCGKEQDAVKRLVAGPGVYICDECISLCNEIIAEDHEHSH). Zn(2+) is bound by residues C16, C19, C38, and C41. Position 122-129 (122-129 (PTGSGKTL)) interacts with ATP.

Belongs to the ClpX chaperone family. As to quaternary structure, component of the ClpX-ClpP complex. Forms a hexameric ring that, in the presence of ATP, binds to fourteen ClpP subunits assembled into a disk-like structure with a central cavity, resembling the structure of eukaryotic proteasomes.

Its function is as follows. ATP-dependent specificity component of the Clp protease. It directs the protease to specific substrates. Can perform chaperone functions in the absence of ClpP. This chain is ATP-dependent Clp protease ATP-binding subunit ClpX, found in Leptospira interrogans serogroup Icterohaemorrhagiae serovar copenhageni (strain Fiocruz L1-130).